The primary structure comprises 189 residues: Probable nicotinate-nucleotide adenylyltransferase (189 aa).

Belongs to the NadD family.

The catalysed reaction is nicotinate beta-D-ribonucleotide + ATP + H(+) = deamido-NAD(+) + diphosphate. Its pathway is cofactor biosynthesis; NAD(+) biosynthesis; deamido-NAD(+) from nicotinate D-ribonucleotide: step 1/1. Functionally, catalyzes the reversible adenylation of nicotinate mononucleotide (NaMN) to nicotinic acid adenine dinucleotide (NaAD). This is Probable nicotinate-nucleotide adenylyltransferase from Bacillus cereus (strain ATCC 10987 / NRS 248).